Reading from the N-terminus, the 349-residue chain is Hydroxymethylglutaryl-CoA synthase (349 aa).

(3S)-3-hydroxy-3-methylglutaryl-CoA is bound by residues Asp-29 and Ala-30. The active-site Proton donor/acceptor is the Glu-81. The (3S)-3-hydroxy-3-methylglutaryl-CoA site is built by Cys-113 and Thr-154. The active-site Acyl-thioester intermediate is the Cys-113. Residue Arg-202 coordinates CoA. Positions 204 and 237 each coordinate (3S)-3-hydroxy-3-methylglutaryl-CoA. His-237 (proton donor/acceptor) is an active-site residue. Lys-242 contributes to the CoA binding site. The (3S)-3-hydroxy-3-methylglutaryl-CoA site is built by Lys-246, Asn-269, and Ser-299.

This sequence belongs to the thiolase-like superfamily. Archaeal HMG-CoA synthase family. In terms of assembly, interacts with acetoacetyl-CoA thiolase that catalyzes the precedent step in the pathway and with a DUF35 protein. The acetoacetyl-CoA thiolase/HMG-CoA synthase complex channels the intermediate via a fused CoA-binding site, which allows for efficient coupling of the endergonic thiolase reaction with the exergonic HMGCS reaction.

The catalysed reaction is acetoacetyl-CoA + acetyl-CoA + H2O = (3S)-3-hydroxy-3-methylglutaryl-CoA + CoA + H(+). It functions in the pathway metabolic intermediate biosynthesis; (R)-mevalonate biosynthesis; (R)-mevalonate from acetyl-CoA: step 2/3. Catalyzes the condensation of acetyl-CoA with acetoacetyl-CoA to form 3-hydroxy-3-methylglutaryl-CoA (HMG-CoA). Functions in the mevalonate (MVA) pathway leading to isopentenyl diphosphate (IPP), a key precursor for the biosynthesis of isoprenoid compounds that are building blocks of archaeal membrane lipids. In Methanosarcina mazei (strain ATCC BAA-159 / DSM 3647 / Goe1 / Go1 / JCM 11833 / OCM 88) (Methanosarcina frisia), this protein is Hydroxymethylglutaryl-CoA synthase.